Reading from the N-terminus, the 233-residue chain is Leucyl/phenylalanyl-tRNA--protein transferase (233 aa).

Belongs to the L/F-transferase family.

It localises to the cytoplasm. It carries out the reaction N-terminal L-lysyl-[protein] + L-leucyl-tRNA(Leu) = N-terminal L-leucyl-L-lysyl-[protein] + tRNA(Leu) + H(+). It catalyses the reaction N-terminal L-arginyl-[protein] + L-leucyl-tRNA(Leu) = N-terminal L-leucyl-L-arginyl-[protein] + tRNA(Leu) + H(+). The catalysed reaction is L-phenylalanyl-tRNA(Phe) + an N-terminal L-alpha-aminoacyl-[protein] = an N-terminal L-phenylalanyl-L-alpha-aminoacyl-[protein] + tRNA(Phe). In terms of biological role, functions in the N-end rule pathway of protein degradation where it conjugates Leu, Phe and, less efficiently, Met from aminoacyl-tRNAs to the N-termini of proteins containing an N-terminal arginine or lysine. The polypeptide is Leucyl/phenylalanyl-tRNA--protein transferase (Anaeromyxobacter dehalogenans (strain 2CP-C)).